The primary structure comprises 329 residues: PDZ and LIM domain protein 1 (329 aa).

T2 is modified (N-acetylthreonine). One can recognise a PDZ domain in the interval 3-85 (TQQIDLQGPG…NLTLTVARSE (83 aa)). Residues S90 and S130 each carry the phosphoserine modification. Y144 carries the post-translational modification Phosphotyrosine. The LIM zinc-binding domain occupies 258-317 (PMCDKCGTGIVGVFVKLRDRHRHPECYVCTDCGTNLKQKGHFFVEDQIYCEKHARERVTP). Zn(2+) contacts are provided by C260, C263, H280, C283, C286, C289, C307, and H310. At T316 the chain carries Phosphothreonine. At Y321 the chain carries Phosphotyrosine.

In terms of assembly, interacts with ACTN1, ACTN2 and ACTN4. Interacts with PDLIM4. Strongly expressed in the heart and skeletal muscle, moderately expressed in the spleen, small intestine, colon, placenta, and lung. A lower level expression is seen in liver, thymus, kidney, prostate and pancreas and is not found in the brain, testis, ovary, and peripheral blood leukocytes.

Its subcellular location is the cytoplasm. The protein resides in the cytoskeleton. It localises to the myofibril. The protein localises to the sarcomere. It is found in the z line. Cytoskeletal protein that may act as an adapter that brings other proteins (like kinases) to the cytoskeleton. Involved in assembly, disassembly and directioning of stress fibers in fibroblasts. Required for the localization of ACTN1 and PALLD to stress fibers. Required for cell migration and in maintaining cell polarity of fibroblasts. In Homo sapiens (Human), this protein is PDZ and LIM domain protein 1 (PDLIM1).